The following is a 415-amino-acid chain: Serine hydroxymethyltransferase (415 aa).

Residues Leu122 and 126 to 128 (GHL) each bind (6S)-5,6,7,8-tetrahydrofolate. Lys230 bears the N6-(pyridoxal phosphate)lysine mark.

The protein belongs to the SHMT family. In terms of assembly, homodimer. The cofactor is pyridoxal 5'-phosphate.

It is found in the cytoplasm. It catalyses the reaction (6R)-5,10-methylene-5,6,7,8-tetrahydrofolate + glycine + H2O = (6S)-5,6,7,8-tetrahydrofolate + L-serine. It participates in one-carbon metabolism; tetrahydrofolate interconversion. Its pathway is amino-acid biosynthesis; glycine biosynthesis; glycine from L-serine: step 1/1. Its function is as follows. Catalyzes the reversible interconversion of serine and glycine with tetrahydrofolate (THF) serving as the one-carbon carrier. This reaction serves as the major source of one-carbon groups required for the biosynthesis of purines, thymidylate, methionine, and other important biomolecules. Also exhibits THF-independent aldolase activity toward beta-hydroxyamino acids, producing glycine and aldehydes, via a retro-aldol mechanism. The protein is Serine hydroxymethyltransferase of Cupriavidus taiwanensis (strain DSM 17343 / BCRC 17206 / CCUG 44338 / CIP 107171 / LMG 19424 / R1) (Ralstonia taiwanensis (strain LMG 19424)).